A 123-amino-acid chain; its full sequence is Ragulator complex protein LAMTOR3-B (123 aa).

Belongs to the LAMTOR3 family. As to quaternary structure, part of the Ragulator complex composed of lamtor1, lamtor2, lamtor3, lamtor4 and lamtor5. The Ragulator complex interacts with slc38a9; the probable amino acid sensor. Component of the lysosomal folliculin complex (LFC).

The protein localises to the late endosome membrane. Functionally, as part of the Ragulator complex it is involved in amino acid sensing and activation of mTORC1, a signaling complex promoting cell growth in response to growth factors, energy levels, and amino acids. Activated by amino acids through a mechanism involving the lysosomal V-ATPase, the Ragulator plays a dual role for the small GTPases Rag (RagA/RRAGA, RagB/RRAGB, RagC/RRAGC and/or RagD/RRAGD): it (1) acts as a guanine nucleotide exchange factor (GEF), activating the small GTPases Rag and (2) mediates recruitment of Rag GTPases to the lysosome membrane. Activated Ragulator and Rag GTPases function as a scaffold recruiting mTORC1 to lysosomes where it is in turn activated. In Xenopus laevis (African clawed frog), this protein is Ragulator complex protein LAMTOR3-B (lamtor3-b).